We begin with the raw amino-acid sequence, 251 residues long: Tropomyosin-2 (251 aa).

Residues 1–251 (MSGEEKLGKL…DTVADEPDDE (251 aa)) are a coiled coil.

This sequence belongs to the tropomyosin family. As to quaternary structure, homodimer. Striated muscle specific.

In Podocoryna carnea (Hydrozoan), this protein is Tropomyosin-2 (TPM2).